The chain runs to 93 residues: Ubiquinol-cytochrome-c reductase complex assembly factor 3 (93 aa).

Over 1–7 (MDSLRKM) the chain is Mitochondrial matrix. A helical transmembrane segment spans residues 8–28 (LISVAMLGAGAGVGYALLVIV). Residues 23–80 (ALLVIVTPGERRKQEMLKEMPLQDPRSREEAARTQQLLLATLQEAATTQENVAWRKNW) are mediates lipid-binding. Residues 29 to 93 (TPGERRKQEM…GEGGAGGRSP (65 aa)) lie on the Mitochondrial intermembrane side of the membrane.

This sequence belongs to the UQCC3 family. Associates with the ubiquinol-cytochrome c reductase complex (mitochondrial respiratory chain complex III or cytochrome b-c1 complex). Interacts with UQCC1. Forms a complex, named COMC, composed of UQCC1, UQCC2; UQCC3 and UQCC4; mediates MT-CYB hemylation and association with the first nuclear-encoded complex III subunit UQCRQ. In terms of processing, probably cleaved by OMA1 under mitochondrial stress conditions.

The protein localises to the mitochondrion inner membrane. Its function is as follows. Required for the assembly of the ubiquinol-cytochrome c reductase complex (mitochondrial respiratory chain complex III or cytochrome b-c1 complex), mediating cytochrome b recruitment and probably stabilization within the complex. Thereby, plays an important role in ATP production by mitochondria. Cardiolipin-binding protein, it may also control the cardiolipin composition of mitochondria membranes and their morphology. The polypeptide is Ubiquinol-cytochrome-c reductase complex assembly factor 3 (Homo sapiens (Human)).